The following is a 160-amino-acid chain: 6,7-dimethyl-8-ribityllumazine synthase (160 aa).

Residues phenylalanine 22, 57–59, and 81–83 contribute to the 5-amino-6-(D-ribitylamino)uracil site; these read AVE and AVI. 86 to 87 lines the (2S)-2-hydroxy-3-oxobutyl phosphate pocket; that stretch reads GT. The Proton donor role is filled by histidine 89. Phenylalanine 114 contributes to the 5-amino-6-(D-ribitylamino)uracil binding site. Arginine 128 is a binding site for (2S)-2-hydroxy-3-oxobutyl phosphate.

The protein belongs to the DMRL synthase family. Forms an icosahedral capsid composed of 60 subunits, arranged as a dodecamer of pentamers.

The catalysed reaction is (2S)-2-hydroxy-3-oxobutyl phosphate + 5-amino-6-(D-ribitylamino)uracil = 6,7-dimethyl-8-(1-D-ribityl)lumazine + phosphate + 2 H2O + H(+). It participates in cofactor biosynthesis; riboflavin biosynthesis; riboflavin from 2-hydroxy-3-oxobutyl phosphate and 5-amino-6-(D-ribitylamino)uracil: step 1/2. Functionally, catalyzes the formation of 6,7-dimethyl-8-ribityllumazine by condensation of 5-amino-6-(D-ribitylamino)uracil with 3,4-dihydroxy-2-butanone 4-phosphate. This is the penultimate step in the biosynthesis of riboflavin. The sequence is that of 6,7-dimethyl-8-ribityllumazine synthase from Shewanella sediminis (strain HAW-EB3).